Reading from the N-terminus, the 319-residue chain is Ribosomal RNA small subunit methyltransferase H (319 aa).

Residues 39–41, Asp-59, Phe-83, Asp-104, and Gln-111 each bind S-adenosyl-L-methionine; that span reads GGH.

Belongs to the methyltransferase superfamily. RsmH family.

It is found in the cytoplasm. The catalysed reaction is cytidine(1402) in 16S rRNA + S-adenosyl-L-methionine = N(4)-methylcytidine(1402) in 16S rRNA + S-adenosyl-L-homocysteine + H(+). In terms of biological role, specifically methylates the N4 position of cytidine in position 1402 (C1402) of 16S rRNA. The sequence is that of Ribosomal RNA small subunit methyltransferase H from Ralstonia nicotianae (strain ATCC BAA-1114 / GMI1000) (Ralstonia solanacearum).